The primary structure comprises 205 residues: Small ribosomal subunit protein uS4 (205 aa).

Residues Met1–Gly16 show a composition bias toward basic and acidic residues. Residues Met1–Ser46 are disordered. Residues Ser94–Val157 enclose the S4 RNA-binding domain.

This sequence belongs to the universal ribosomal protein uS4 family. As to quaternary structure, part of the 30S ribosomal subunit. Contacts protein S5. The interaction surface between S4 and S5 is involved in control of translational fidelity.

One of the primary rRNA binding proteins, it binds directly to 16S rRNA where it nucleates assembly of the body of the 30S subunit. Functionally, with S5 and S12 plays an important role in translational accuracy. The protein is Small ribosomal subunit protein uS4 of Rhizobium meliloti (strain 1021) (Ensifer meliloti).